We begin with the raw amino-acid sequence, 88 residues long: ATP synthase subunit 9, mitochondrial (88 aa).

The next 2 helical transmembrane spans lie at Ile30–Val50 and Leu66–Leu86.

It belongs to the ATPase C chain family. In terms of assembly, F-type ATPases have 2 components, CF(1) - the catalytic core - and CF(0) - the membrane proton channel. CF(1) has five subunits: alpha(3), beta(3), gamma(1), delta(1), epsilon(1). CF(0) has three main subunits: a, b and c.

It localises to the mitochondrion membrane. In terms of biological role, mitochondrial membrane ATP synthase (F(1)F(0) ATP synthase or Complex V) produces ATP from ADP in the presence of a proton gradient across the membrane which is generated by electron transport complexes of the respiratory chain. F-type ATPases consist of two structural domains, F(1) - containing the extramembraneous catalytic core and F(0) - containing the membrane proton channel, linked together by a central stalk and a peripheral stalk. During catalysis, ATP synthesis in the catalytic domain of F(1) is coupled via a rotary mechanism of the central stalk subunits to proton translocation. Part of the complex F(0) domain. A homomeric c-ring of probably 10 subunits is part of the complex rotary element. The chain is ATP synthase subunit 9, mitochondrial (atp9) from Dictyostelium citrinum (Slime mold).